The following is a 702-amino-acid chain: Ribosomal RNA large subunit methyltransferase K/L (702 aa).

The THUMP domain maps to 43–154 (LVYQSLMWSR…KETASIALDL (112 aa)).

This sequence belongs to the methyltransferase superfamily. RlmKL family.

It localises to the cytoplasm. The catalysed reaction is guanosine(2445) in 23S rRNA + S-adenosyl-L-methionine = N(2)-methylguanosine(2445) in 23S rRNA + S-adenosyl-L-homocysteine + H(+). It carries out the reaction guanosine(2069) in 23S rRNA + S-adenosyl-L-methionine = N(2)-methylguanosine(2069) in 23S rRNA + S-adenosyl-L-homocysteine + H(+). In terms of biological role, specifically methylates the guanine in position 2445 (m2G2445) and the guanine in position 2069 (m7G2069) of 23S rRNA. This chain is Ribosomal RNA large subunit methyltransferase K/L, found in Shigella dysenteriae serotype 1 (strain Sd197).